Here is a 308-residue protein sequence, read N- to C-terminus: 4-hydroxyproline 2-epimerase (308 aa).

The Proton acceptor role is filled by cysteine 88. Substrate is bound by residues 89 to 90, histidine 208, and aspartate 232; that span reads GH. The active-site Proton donor is cysteine 236. 237 to 238 contacts substrate; it reads GT.

The protein belongs to the proline racemase family.

The catalysed reaction is trans-4-hydroxy-L-proline = cis-4-hydroxy-D-proline. Catalyzes the epimerization of trans-4-hydroxy-L-proline (t4LHyp) to cis-4-hydroxy-D-proline (c4DHyp). Is likely involved in a degradation pathway that converts t4LHyp to alpha-ketoglutarate. Can also catalyze the epimerization of trans-3-hydroxy-L-proline (t3LHyp) to cis-3-hydroxy-D-proline (c3DHyp), albeit with 19-fold lower efficiency. Displays no proline racemase activity. The polypeptide is 4-hydroxyproline 2-epimerase (Chromobacterium violaceum (strain ATCC 12472 / DSM 30191 / JCM 1249 / CCUG 213 / NBRC 12614 / NCIMB 9131 / NCTC 9757 / MK)).